The primary structure comprises 443 residues: ATP-dependent protease ATPase subunit HslU (443 aa).

Residues V18, G60–E65, D255, E321, and R393 each bind ATP.

This sequence belongs to the ClpX chaperone family. HslU subfamily. In terms of assembly, a double ring-shaped homohexamer of HslV is capped on each side by a ring-shaped HslU homohexamer. The assembly of the HslU/HslV complex is dependent on binding of ATP.

The protein localises to the cytoplasm. In terms of biological role, ATPase subunit of a proteasome-like degradation complex; this subunit has chaperone activity. The binding of ATP and its subsequent hydrolysis by HslU are essential for unfolding of protein substrates subsequently hydrolyzed by HslV. HslU recognizes the N-terminal part of its protein substrates and unfolds these before they are guided to HslV for hydrolysis. In Colwellia psychrerythraea (strain 34H / ATCC BAA-681) (Vibrio psychroerythus), this protein is ATP-dependent protease ATPase subunit HslU.